Reading from the N-terminus, the 168-residue chain is uncharacterized protein (168 aa).

2 helical membrane passes run 41 to 61 (LLPW…LFFI) and 133 to 153 (KFVI…FFVL).

It is found in the cell membrane. This is an uncharacterized protein from Thermotoga maritima (strain ATCC 43589 / DSM 3109 / JCM 10099 / NBRC 100826 / MSB8).